The chain runs to 1140 residues: Kinesin-like protein KIN-14O (1140 aa).

Positions 1-12 are enriched in basic and acidic residues; it reads MLESEFQREHAF. Disordered regions lie at residues 1–37, 50–81, 161–217, and 323–347; these read MLES…ADDD, NPAE…DEDS, SPGS…GGHK, and ASGT…KEED. The segment covering 161-179 has biased composition (low complexity); sequence SPGSSHGGSTPRSPFSPSS. Over residues 180 to 193 the composition is skewed to basic and acidic residues; sequence PRERHNKGLADSRF. The segment covering 197 to 209 has biased composition (polar residues); sequence LPNSSALDPSSPG. A coiled-coil region spans residues 327-546; the sequence is SEENETEKSK…KAKEMEEKSE (220 aa). Residues 332–347 show a composition bias toward basic and acidic residues; the sequence is TEKSKLEEKKKDKEED. The 321-residue stretch at 632–952 folds into the Kinesin motor domain; sequence NIRVYCRVRP…LKFAERVSGV (321 aa). 716 to 723 contributes to the ATP binding site; that stretch reads GQTGSGKT. The span at 1002 to 1018 shows a compositional bias: polar residues; that stretch reads LGQSDDFNSEAGDSQLS. 2 disordered regions span residues 1002-1021 and 1028-1140; these read LGQS…SIED and DYTR…KRWS. Residues 1066-1078 are compositionally biased toward basic and acidic residues; the sequence is EGRKPLKISDKPK. Residues 1099 to 1130 show a composition bias toward polar residues; the sequence is TMRTTNIAKATSALLSPSSQGMKKTGSASNFL.

It belongs to the TRAFAC class myosin-kinesin ATPase superfamily. Kinesin family. KIN-14 subfamily.

In Arabidopsis thaliana (Mouse-ear cress), this protein is Kinesin-like protein KIN-14O.